A 176-amino-acid chain; its full sequence is ATP synthase subunit delta (176 aa).

This sequence belongs to the ATPase delta chain family. F-type ATPases have 2 components, F(1) - the catalytic core - and F(0) - the membrane proton channel. F(1) has five subunits: alpha(3), beta(3), gamma(1), delta(1), epsilon(1). F(0) has three main subunits: a(1), b(2) and c(10-14). The alpha and beta chains form an alternating ring which encloses part of the gamma chain. F(1) is attached to F(0) by a central stalk formed by the gamma and epsilon chains, while a peripheral stalk is formed by the delta and b chains.

It localises to the cell inner membrane. Its function is as follows. F(1)F(0) ATP synthase produces ATP from ADP in the presence of a proton or sodium gradient. F-type ATPases consist of two structural domains, F(1) containing the extramembraneous catalytic core and F(0) containing the membrane proton channel, linked together by a central stalk and a peripheral stalk. During catalysis, ATP synthesis in the catalytic domain of F(1) is coupled via a rotary mechanism of the central stalk subunits to proton translocation. Functionally, this protein is part of the stalk that links CF(0) to CF(1). It either transmits conformational changes from CF(0) to CF(1) or is implicated in proton conduction. This chain is ATP synthase subunit delta, found in Polaromonas sp. (strain JS666 / ATCC BAA-500).